The sequence spans 315 residues: Zinc finger transcription factor ref-2 (315 aa).

Residues V83–H112 form a C2H2-type 1; atypical zinc finger. A C2H2-type 2; degenerate zinc finger spans residues K124 to H146. C2H2-type zinc fingers lie at residues F152–H174, F180–H204, and Y210–H234. The segment at S225–P270 is disordered. The segment covering V233 to S249 has biased composition (basic and acidic residues). The span at D251 to P270 shows a compositional bias: polar residues.

As to quaternary structure, interacts with TCF transcription factor pop-1; the interaction is direct and facilitates transcriptional activation; transcription may be repressed by beta-catenin/sys-1.

The protein localises to the nucleus. The protein resides in the cytoplasm. Functionally, transcription factor. Modulates expression of target genes by binding to regulatory elements. Required for normal cell division timing and cell positioning in anterior lineages, acting in a cell-autonomous manner. Required for development, fusion and fate of cells of the ventral epidermis, the Pn.p cells, during larval development; acts in concert with homeobox genes lin-39 and mab-5. Required for the specification of the AIY interneuron. In complex with TCF transcription factor pop-1, positively modulates expression of LIM/homeobox protein ttx-3 in anterior daughter cells of the SMDD/AIY neuron lineage. In Caenorhabditis elegans, this protein is Zinc finger transcription factor ref-2.